A 95-amino-acid polypeptide reads, in one-letter code: UPF0473 protein PEPE_1260 (95 aa).

This sequence belongs to the UPF0473 family.

This chain is UPF0473 protein PEPE_1260, found in Pediococcus pentosaceus (strain ATCC 25745 / CCUG 21536 / LMG 10740 / 183-1w).